Consider the following 264-residue polypeptide: MGCWLKQPQGITTMMGCWLTKSRENILDNVIVTDAKLKISMNFEDCAKKIRKVACQFEVKSCITDIDDQKVLVSGDFNLHKLVKTLKKKTGKKIEIVTKNEKSSEDKVDDTVQNEDSKDEIVPQNADKPETSIMEVEFDIPFLCEKYEKDFGKVISKCTGVETYVVDLENKKVVVIGNFDKDELSRKLNKKMHQKIKKAEKERQEWESEMMLREAEEEKRLADIYEEIDKDRNVSLNPITDYEKEMAKHYYMFSDENPNACSIS.

HMA domains follow at residues 32 to 95 (VTDA…KKIE) and 133 to 204 (IMEV…KERQ). Positions 185–218 (SRKLNKKMHQKIKKAEKERQEWESEMMLREAEEE) form a coiled coil. Cys261 is subject to Cysteine methyl ester. Cys261 is lipidated: S-farnesyl cysteine. Residues 262–264 (SIS) constitute a propeptide, removed in mature form.

This sequence belongs to the HIPP family.

Its function is as follows. Probable heavy-metal-binding protein. In Arabidopsis thaliana (Mouse-ear cress), this protein is Heavy metal-associated isoprenylated plant protein 17.